The primary structure comprises 62 residues: Short neurotoxin 1 (62 aa).

Residues 1-17 are compositionally biased toward polar residues; sequence MQCCNQQSSQPKTTTTC. A disordered region spans residues 1–20; it reads MQCCNQQSSQPKTTTTCPGG. Cystine bridges form between cysteine 3-cysteine 24, cysteine 17-cysteine 41, cysteine 43-cysteine 54, and cysteine 55-cysteine 60.

The protein belongs to the three-finger toxin family. Short-chain subfamily. Type I alpha-neurotoxin sub-subfamily. In terms of tissue distribution, expressed by the venom gland.

It localises to the secreted. In terms of biological role, binds to muscle nicotinic acetylcholine receptor (nAChR) and inhibit acetylcholine from binding to the receptor, thereby impairing neuromuscular transmission. The chain is Short neurotoxin 1 from Acanthophis antarcticus (Common death adder).